A 300-amino-acid polypeptide reads, in one-letter code: MHSLEKVTFEDVAIDFTQEEWDMMDTSKRKLYRDVMLENISHLVSLGYQISKSYIILQLEQGKELWWEGRVFLQDQNPDRESALKKKHMISMHPIIRKDTSTSMTMENSLILEDPFEYNDSGEDCTHSSTITQCLLTHSGKKPCVSKQCGKSLRNLLSPKPRKQIHTKGKSYQCNLCEKAYTNCFYLRRHKMTHTGERPYACHLCGKAFTQCSHLRRHEKTHTGERPYKCHQCGKAFIQSFNLRRHERTHLGQKCYECDKSGKAFSQSSGFRGNKIIHIGEKPPACLLCGKAFSLSSDLR.

A KRAB domain is found at 7–78 (VTFEDVAIDF…GRVFLQDQNP (72 aa)). C2H2-type zinc fingers lie at residues 172-194 (YQCNLCEKAYTNCFYLRRHKMTH), 200-222 (YACHLCGKAFTQCSHLRRHEKTH), and 228-250 (YKCHQCGKAFIQSFNLRRHERTH). The C2H2-type 4; degenerate zinc-finger motif lies at 256-278 (YECDKSGKAFSQSSGFRGNKIIH).

This sequence belongs to the krueppel C2H2-type zinc-finger protein family.

It is found in the nucleus. Functionally, may be involved in transcriptional regulation. The sequence is that of Zinc finger protein 705B (ZNF705B) from Homo sapiens (Human).